Reading from the N-terminus, the 556-residue chain is MQREYDYIIIGAGSAGNVLAARLTEDPGVTVLLLEAGGPDYRLDFRTQMPAALAFPLQGRRYNWAYETEPEPYMDNRRMECGRGKGLGGSSLINGMCYIRGNALDFDHWAKRPGLEDWSYRDVLPYFRKAETRDIGANDYHGGDGPVSVATPKNDNNVLFHAMVEAGVQAGYPRTDDLNGYQQEGFGPMDRTVTPRGRRASTARGYLDMAKPRDGLHIVTHATTDRILFAGKRAIGVHYLVGNSSEGIDAHARREVLVCAGAIASPQLLQRSGVGAPDLLRALDVQLVHDLPGVGQNLQDHLEVYIQYACTKPVSLYPALQWWNQPAIGAEWLFAGTGTGASNQFEAGGFIRTREEFDWPNIQYHFLPVAINYNGSNAVKEHGFQAHVGSMRTPSRGRVHAKSRDPRQHPSILFNYQSTDQDWQEFRDAIRITREIIAQPALDPYRGREISPSADCKTDAELDAFVRSRAETAYHPSCSCAMGTDDMAVVDGQGRVHGMEGLRVIDASIMPRIITGNLNATTIMIAEKIADRMRGRPPLPRSTADYYIAGDAPVRG.

6-35 serves as a coordination point for FAD; it reads DYIIIGAGSAGNVLAARLTEDPGVTVLLLE. Residue H475 is the Proton acceptor of the active site.

This sequence belongs to the GMC oxidoreductase family. It depends on FAD as a cofactor.

It catalyses the reaction choline + A = betaine aldehyde + AH2. It carries out the reaction betaine aldehyde + NAD(+) + H2O = glycine betaine + NADH + 2 H(+). It participates in amine and polyamine biosynthesis; betaine biosynthesis via choline pathway; betaine aldehyde from choline (cytochrome c reductase route): step 1/1. Functionally, involved in the biosynthesis of the osmoprotectant glycine betaine. Catalyzes the oxidation of choline to betaine aldehyde and betaine aldehyde to glycine betaine at the same rate. This chain is Oxygen-dependent choline dehydrogenase, found in Xanthomonas euvesicatoria pv. vesicatoria (strain 85-10) (Xanthomonas campestris pv. vesicatoria).